The primary structure comprises 1357 residues: Regulator of V-ATPase in vacuolar membrane protein 1 (1357 aa).

8 WD repeats span residues 98–134 (HDDT…GVYQ), 142–182 (KQPK…GEQA), 190–239 (PHPK…KNHT), 384–423 (GHNK…HGVS), 431–470 (QTES…KEDS), 595–636 (INTG…LEYE), 638–679 (TFHN…YTNN), and 898–939 (QKSI…RIAY). Residues 1243-1357 (GSPSASDIES…ITKNLLDDFV (115 aa)) form a disordered region. Phosphoserine is present on residues S1244 and S1248. A compositionally biased stretch (low complexity) spans 1272–1288 (STSSNSLAQSSSSAPRS). The span at 1320-1332 (SENRKDKLSKDIL) shows a compositional bias: basic and acidic residues.

Component of the RAVE complex composed of RAV1, RAV2 and CBF3D/SKP1. Within the complex, it interacts directly with RAV2 and CBF3D. Interacts with the V-ATPase V1 subunits VMA1, VMA2 and VMA8.

It localises to the endomembrane system. Its function is as follows. Component of the RAVE complex, which is required for stable assembly of the vacuolar ATPase complex V-ATPase under many conditions. Required for transport between the early endosome and the late endosome/prevacuolar compartment (PVC), suggesting that assembly of vacuolar ATPase at the early endosome is required for transport from the early endosome to the PVC. In Saccharomyces cerevisiae (strain ATCC 204508 / S288c) (Baker's yeast), this protein is Regulator of V-ATPase in vacuolar membrane protein 1 (RAV1).